The following is a 232-amino-acid chain: Orotidine 5'-phosphate decarboxylase (232 aa).

Substrate contacts are provided by residues Asp13, Lys35, 62–71 (DLKFHDIPNT), Thr122, Arg182, Gln191, Gly211, and Arg212. Residue Lys64 is the Proton donor of the active site.

Belongs to the OMP decarboxylase family. Type 1 subfamily. In terms of assembly, homodimer.

It carries out the reaction orotidine 5'-phosphate + H(+) = UMP + CO2. The protein operates within pyrimidine metabolism; UMP biosynthesis via de novo pathway; UMP from orotate: step 2/2. Its function is as follows. Catalyzes the decarboxylation of orotidine 5'-monophosphate (OMP) to uridine 5'-monophosphate (UMP). The sequence is that of Orotidine 5'-phosphate decarboxylase from Pseudomonas syringae pv. syringae (strain B728a).